The primary structure comprises 317 residues: Ribosomal protein L11 methyltransferase (317 aa).

Residues Thr-162, Gly-183, Asp-205, and Asn-248 each coordinate S-adenosyl-L-methionine.

This sequence belongs to the methyltransferase superfamily. PrmA family.

It localises to the cytoplasm. It catalyses the reaction L-lysyl-[protein] + 3 S-adenosyl-L-methionine = N(6),N(6),N(6)-trimethyl-L-lysyl-[protein] + 3 S-adenosyl-L-homocysteine + 3 H(+). In terms of biological role, methylates ribosomal protein L11. The polypeptide is Ribosomal protein L11 methyltransferase (Alkaliphilus metalliredigens (strain QYMF)).